Here is a 465-residue protein sequence, read N- to C-terminus: ATP synthase subunit beta (465 aa).

152 to 159 (GGAGVGKT) serves as a coordination point for ATP.

The protein belongs to the ATPase alpha/beta chains family. In terms of assembly, F-type ATPases have 2 components, CF(1) - the catalytic core - and CF(0) - the membrane proton channel. CF(1) has five subunits: alpha(3), beta(3), gamma(1), delta(1), epsilon(1). CF(0) has three main subunits: a(1), b(2) and c(9-12). The alpha and beta chains form an alternating ring which encloses part of the gamma chain. CF(1) is attached to CF(0) by a central stalk formed by the gamma and epsilon chains, while a peripheral stalk is formed by the delta and b chains.

Its subcellular location is the cell inner membrane. The enzyme catalyses ATP + H2O + 4 H(+)(in) = ADP + phosphate + 5 H(+)(out). Its function is as follows. Produces ATP from ADP in the presence of a proton gradient across the membrane. The catalytic sites are hosted primarily by the beta subunits. This is ATP synthase subunit beta from Campylobacter curvus (strain 525.92).